The chain runs to 498 residues: Polyphosphate:AMP phosphotransferase (498 aa).

PPK2 regions lie at residues 11–234 (IDDD…MQAA) and 269–491 (LSKE…LEKA).

The protein belongs to the polyphosphate kinase 2 (PPK2) family. Class II subfamily.

It catalyses the reaction [phosphate](n) + ADP = [phosphate](n+1) + AMP. Uses inorganic polyphosphate (polyP) as a donor to convert AMP to ADP. Can also convert GMP to GDP, with lower efficiency. This Pseudomonas syringae pv. tomato (strain ATCC BAA-871 / DC3000) protein is Polyphosphate:AMP phosphotransferase.